A 137-amino-acid polypeptide reads, in one-letter code: S-adenosylmethionine decarboxylase proenzyme (137 aa).

S63 functions as the Schiff-base intermediate with substrate; via pyruvic acid in the catalytic mechanism. S63 bears the Pyruvic acid (Ser); by autocatalysis mark. H68 functions as the Proton acceptor; for processing activity in the catalytic mechanism. C83 (proton donor; for catalytic activity) is an active-site residue.

It belongs to the prokaryotic AdoMetDC family. Type 1 subfamily. In terms of assembly, heterotetramer of two alpha and two beta chains arranged as a dimer of alpha/beta heterodimers. The cofactor is pyruvate. In terms of processing, is synthesized initially as an inactive proenzyme. Formation of the active enzyme involves a self-maturation process in which the active site pyruvoyl group is generated from an internal serine residue via an autocatalytic post-translational modification. Two non-identical subunits are generated from the proenzyme in this reaction, and the pyruvate is formed at the N-terminus of the alpha chain, which is derived from the carboxyl end of the proenzyme. The post-translation cleavage follows an unusual pathway, termed non-hydrolytic serinolysis, in which the side chain hydroxyl group of the serine supplies its oxygen atom to form the C-terminus of the beta chain, while the remainder of the serine residue undergoes an oxidative deamination to produce ammonia and the pyruvoyl group blocking the N-terminus of the alpha chain.

It catalyses the reaction S-adenosyl-L-methionine + H(+) = S-adenosyl 3-(methylsulfanyl)propylamine + CO2. Its pathway is amine and polyamine biosynthesis; S-adenosylmethioninamine biosynthesis; S-adenosylmethioninamine from S-adenosyl-L-methionine: step 1/1. Catalyzes the decarboxylation of S-adenosylmethionine to S-adenosylmethioninamine (dcAdoMet), the propylamine donor required for the synthesis of the polyamines spermine and spermidine from the diamine putrescine. The protein is S-adenosylmethionine decarboxylase proenzyme of Fervidobacterium nodosum (strain ATCC 35602 / DSM 5306 / Rt17-B1).